Reading from the N-terminus, the 495-residue chain is MAQVINTNSLSLLTQNNLNKSQSALGTAIERLSSGLRINSAKDDAAGQAIANRFTANIKGLTQASRNANDGISIAQTTEGALNEINNNLQRVRELAVQSANSTNSQSDLDSIQAEITQRLNEIDRVSGQTQFNGVKVLAQDNTLTIQVGANNGETIDIDLKQINSQTLGLDTLNVQKKYDVKSEAVTPSATLSTTALDGAGLKTGTGSTTDTGSIKDGKVYYNSTSKNYYVEVEFTDATDQTNKGGFYKVNVADDGAVTMTAATTKEATTPTGITEVTQVQKPVAAPAAIQAQLTAAHVTGADTAEMVKMSYTDKNGKTIDGGFGVKVGADIYAATKNKDGSFSINTTEYTDKDGNTKTALNQLGGADGKTEVVSIDGKTYNASKAAGHNFKAQPELAEAAAATTENPLAKIDAALAQVDALRSDLGAVQNRFNSAITNLGNTVNNLSSARSRIEDSDYATEVSNMSRAQILQQAGTSVLAQANQVPQNVLSLLR.

This sequence belongs to the bacterial flagellin family.

It localises to the secreted. Its subcellular location is the bacterial flagellum. Flagellin is the subunit protein which polymerizes to form the filaments of bacterial flagella. The protein is Flagellin (fliC) of Salmonella paratyphi A (strain ATCC 9150 / SARB42).